We begin with the raw amino-acid sequence, 247 residues long: PF03932 family protein CutC (247 aa).

Belongs to the CutC family.

It localises to the cytoplasm. This Aliivibrio fischeri (strain MJ11) (Vibrio fischeri) protein is PF03932 family protein CutC.